The chain runs to 263 residues: MDKRWSLQGMTALVTGAASGIGYAIVEELAGFGARIHVCDISETLLNQSLREWEKKGFQVSGSVCDVTSRPEREKLMQTVSSLFDGKLNILVNNVGVLRAKPTTEYVADDFTFHISTNLEAAYHFCQLSHPLLKTSGYGSIVFLSSVSGVVSITDCGSLYGLTKGALNQLARNLACEWAKDGIRANAVAPNVVKTAQSQFFLQDVSKKEGLFSRTPLGRSGEPNEVASLVVFLCLPAASYITGQTICIDGGLTVYGFSSQPQA.

13–37 (LVTGAASGIGYAIVEELAGFGARIH) is an NADP(+) binding site. Ser-146 is a binding site for substrate. The Proton acceptor role is filled by Tyr-160.

It belongs to the short-chain dehydrogenases/reductases (SDR) family. SDR65C subfamily.

This chain is Tropinone reductase homolog At2g29300, found in Arabidopsis thaliana (Mouse-ear cress).